Reading from the N-terminus, the 460-residue chain is RING finger protein DG17 (460 aa).

The segment at 27-67 adopts an RING-type zinc-finger fold; the sequence is CPICFEFIYKKQIYQCKSGHHACKECWEKSLETKKECMTCK. TRAF-type zinc fingers lie at residues 141 to 194 and 196 to 253; these read SHLI…KKEL and THYK…SELQ. Residues 269–294 adopt a coiled-coil conformation; the sequence is IEKLTNQVGQSKKTHDELLKKIEDLS. The region spanning 320 to 448 is the MATH domain; sequence GYRNKWIISN…DDKLIIEIYI (129 aa).

Belongs to the TNF receptor-associated factor family. A subfamily.

Its subcellular location is the cytoplasm. Functionally, probable adapter protein and signal transducer that links members of the tumor necrosis factor receptor family to different signaling pathways by association with the receptor cytoplasmic domain and kinases. The protein is RING finger protein DG17 (zfaA) of Dictyostelium discoideum (Social amoeba).